The following is a 252-amino-acid chain: Electron transfer flavoprotein subunit beta (252 aa).

This sequence belongs to the ETF beta-subunit/FixA family. As to quaternary structure, heterodimer of an alpha and a beta subunit. Requires AMP as cofactor.

The protein localises to the cytoplasm. It participates in lipid metabolism; butanoate metabolism. Its function is as follows. Part of an electron transfer flavoprotein involved in syntrophic growth of S.wolfei with butyrate. Probably receives electrons from butyryl-CoA dehydrogenases, and transfers them to the membrane-bound quinone oxidoreductase Swol_0698. The polypeptide is Electron transfer flavoprotein subunit beta (Syntrophomonas wolfei subsp. wolfei (strain DSM 2245B / Goettingen)).